Here is a 258-residue protein sequence, read N- to C-terminus: Ribosomal RNA large subunit methyltransferase E (258 aa).

Residues glycine 58, tryptophan 60, aspartate 78, aspartate 96, and aspartate 120 each coordinate S-adenosyl-L-methionine. Lysine 160 serves as the catalytic Proton acceptor.

The protein belongs to the class I-like SAM-binding methyltransferase superfamily. RNA methyltransferase RlmE family.

The protein resides in the cytoplasm. The enzyme catalyses uridine(2552) in 23S rRNA + S-adenosyl-L-methionine = 2'-O-methyluridine(2552) in 23S rRNA + S-adenosyl-L-homocysteine + H(+). Specifically methylates the uridine in position 2552 of 23S rRNA at the 2'-O position of the ribose in the fully assembled 50S ribosomal subunit. The chain is Ribosomal RNA large subunit methyltransferase E from Methanococcus maripaludis (strain C5 / ATCC BAA-1333).